A 176-amino-acid chain; its full sequence is Cytochrome c-552 (176 aa).

The helical; Signal-anchor transmembrane segment at 12-32 (GALIGSLLFLLLMSWAASGIF) threads the bilayer. Heme c-binding residues include Cys90, Cys93, His94, Met126, and Met154.

Post-translationally, binds 1 heme c group covalently per subunit.

It localises to the cell membrane. Its function is as follows. Mediates the electron transport between the cytochrome bc1 complex and cytochrome-c oxidase. This Paracoccus denitrificans protein is Cytochrome c-552 (cycM).